Here is a 283-residue protein sequence, read N- to C-terminus: Orotidine 5'-phosphate decarboxylase (283 aa).

Lys97 serves as the catalytic Proton donor.

This sequence belongs to the OMP decarboxylase family. Type 2 subfamily.

The enzyme catalyses orotidine 5'-phosphate + H(+) = UMP + CO2. It functions in the pathway pyrimidine metabolism; UMP biosynthesis via de novo pathway; UMP from orotate: step 2/2. This chain is Orotidine 5'-phosphate decarboxylase, found in Clostridium botulinum (strain Kyoto / Type A2).